A 45-amino-acid chain; its full sequence is Amphipathic peptide Hj0164 (45 aa).

An N-terminal signal peptide occupies residues 1–23 (MKSQAFFLLFLVVLLLATTQSEA). A Phenylalanine amide modification is found at F33. The propeptide occupies 37–45 (SLRDVDTMK).

It belongs to the non-disulfide-bridged peptide (NDBP) superfamily. Short antimicrobial peptide (group 4) family. As to expression, expressed by the venom gland.

The protein resides in the secreted. It localises to the target cell membrane. Functionally, amphipathic peptide that shows antibacterial activities. This is Amphipathic peptide Hj0164 from Hottentotta judaicus (Black scorpion).